We begin with the raw amino-acid sequence, 447 residues long: uncharacterized protein (447 aa).

12 consecutive transmembrane segments (helical) span residues 17–37 (IMMMALGGAIGAGLFKGSSSA), 40–60 (VAGPSVIIAYLLGGIILLFIM), 95–115 (IYWKMWVLNIAAEAVVAAIFI), 118–138 (WLPGCPIWVLALGISLIVTIV), 154–174 (AMIKITVIIIFIILGLLLLFV), 200–220 (GLITAMLVVIYSYGGTEIIGV), 243–263 (IVAFYLLPFFIIVSLIPWNQV), 289–311 (AVILLAIISSMNSGLYGSSRILY), 333–353 (MFAILMCTSSLYIGVLISLFA), 361–381 (LMGSLGYTVLFIWLIIGFAHL), 393–415 (YYVKWFPYTTWFAIVALLAILIG), and 419–441 (TTSIVITGITAAIYLLITVAYLV).

The protein belongs to the amino acid-polyamine-organocation (APC) superfamily.

The protein localises to the cell membrane. Its function is as follows. May participate in leucine metabolism. May transport leucine or a compound related to leucine metabolism. This is an uncharacterized protein from Bacillus subtilis (strain 168).